A 114-amino-acid chain; its full sequence is Histone H3-7 (114 aa).

Over residues 1–17 (NTGGKAPRKHIAHKQAK) the composition is skewed to basic residues. The tract at residues 1 to 32 (NTGGKAPRKHIAHKQAKKSSAAAATGGVKKPH) is disordered. Positions 18 to 28 (KSSAAAATGGV) are enriched in low complexity.

This sequence belongs to the histone H3 family. In terms of assembly, the nucleosome is a histone octamer containing two molecules each of H2A, H2B, H3 and H4 assembled in one H3-H4 heterotetramer and two H2A-H2B heterodimers. The octamer wraps approximately 147 bp of DNA.

The protein resides in the nucleus. It localises to the chromosome. In terms of biological role, core component of nucleosome. Nucleosomes wrap and compact DNA into chromatin, limiting DNA accessibility to the cellular machineries which require DNA as a template. Histones thereby play a central role in transcription regulation, DNA repair, DNA replication and chromosomal stability. DNA accessibility is regulated via a complex set of post-translational modifications of histones, also called histone code, and nucleosome remodeling. In Stylonychia lemnae (Ciliate), this protein is Histone H3-7 (H3-7).